The chain runs to 124 residues: MKTVAFLAVVVLFAAFACASCSSSYAAPAPAPAAAPASSYSSVPAPPCPKNYLFSCQPNLVPAPCAQQAAPAAYGSAGAYTEQVPSYIGFAPYQQLQQYHQRIGNAALIDELRSLGQGIQGQQY.

A signal peptide spans 1 to 19; the sequence is MKTVAFLAVVVLFAAFACA. Positions 42–81 constitute a VM domain; that stretch reads SVPAPPCPKNYLFSCQPNLVPAPCAQQAAPAAYGSAGAYT.

It belongs to the vitelline membrane family.

It is found in the secreted. Major early eggshell protein. In Drosophila pseudoobscura pseudoobscura (Fruit fly), this protein is Vitelline membrane protein Vm32E.